Reading from the N-terminus, the 396-residue chain is Phosphoglycerate kinase (396 aa).

Substrate contacts are provided by residues 21-23 (DLN), R36, 59-62 (HFGR), R118, and R151. ATP is bound by residues K201, E323, and 353 to 356 (GGDT).

It belongs to the phosphoglycerate kinase family. As to quaternary structure, monomer.

The protein localises to the cytoplasm. The catalysed reaction is (2R)-3-phosphoglycerate + ATP = (2R)-3-phospho-glyceroyl phosphate + ADP. It functions in the pathway carbohydrate degradation; glycolysis; pyruvate from D-glyceraldehyde 3-phosphate: step 2/5. The polypeptide is Phosphoglycerate kinase (Rhodospirillum centenum (strain ATCC 51521 / SW)).